The chain runs to 484 residues: Protein DETOXIFICATION 33 (484 aa).

The span at 1–16 shows a compositional bias: basic and acidic residues; sequence MGKDKTLPLLDPREPP. Residues 1–22 are disordered; sequence MGKDKTLPLLDPREPPELTGTK. Helical transmembrane passes span 39-59, 81-101, 122-142, 155-175, 190-210, 218-238, 267-287, 294-314, 338-358, 380-400, 409-429, and 439-459; these read LWEL…LGAL, VISG…ETLC, VILF…PPIL, AGKF…NFPI, WISG…ILYF, AITL…YILI, ALML…TGLL, VDAI…SIGF, VIVV…VVLA, IAVL…LSGV, LVAY…GLVL, and GIWG…IGII.

It belongs to the multi antimicrobial extrusion (MATE) (TC 2.A.66.1) family.

Its subcellular location is the membrane. The sequence is that of Protein DETOXIFICATION 33 from Arabidopsis thaliana (Mouse-ear cress).